Consider the following 392-residue polypeptide: Ceramide phosphoethanolamine synthase (392 aa).

Residues 1–10 lie on the Lumenal side of the membrane; the sequence is MIGPSSQISK. Residues 11 to 31 traverse the membrane as a helical segment; it reads ILLTLLFLLIIFYVFMDVELY. At 32–140 the chain is on the cytoplasmic side; it reads LRIHNYAIER…MFDNVIGFSR (109 aa). Over residues 59–82 the composition is skewed to low complexity; the sequence is SESGSGSIGGSSSSSSSSSSSTST. Residues 59-91 are disordered; it reads SESGSGSIGGSSSSSSSSSSSTSTKLPTAGDRQ. The helical transmembrane segment at 141 to 161 threads the bilayer; that stretch reads STFITPNMISFFHVGVACLAG. The Lumenal portion of the chain corresponds to 162-212; the sequence is KLVASDSLGYRRLGVLLFQIRTFLDDLDGHVARVRKHIRGERSEIGTSGYY. Residues 213-233 form a helical membrane-spanning segment; it reads VDGLCDGLGCIALLLGIFFYL. Topologically, residues 234–271 are cytoplasmic; sequence KNNPPRRGYSIIPMSDSKLPEPTMMIPKMKATTRKVAK. A helical transmembrane segment spans residues 272-288; the sequence is NVISFTGQLLLSSTAWN. Over 289–319 the chain is Lumenal; it reads RYIAVYQNMLEREDVSGNQSHCQDYVFKSTW. The helical transmembrane segment at 320 to 340 threads the bilayer; it reads FFCVAWMWRIVNVHALLHCVL. Residues 341–356 lie on the Cytoplasmic side of the membrane; sequence LSIFCDKLWDFLRAIR. Residues 357–377 form a helical membrane-spanning segment; it reads YSGYIILLVAICLTEMHILEA. At 378 to 392 the chain is on the lumenal side; the sequence is QNYIFNSTACSNISL.

The protein belongs to the CDP-alcohol phosphatidyltransferase class-I family. It depends on Mn(2+) as a cofactor.

It localises to the membrane. The protein resides in the golgi apparatus membrane. The protein localises to the cell membrane. It catalyses the reaction CDP-ethanolamine + an N-acylsphing-4-enine = an N-acylsphing-4-enine 1-phosphoethanolamine + CMP + H(+). The enzyme catalyses CDP-ethanolamine + an N-acyl-sphingoid base = an N-acyl-sphingoid 1-phosphoethanolamine + CMP + H(+). In terms of biological role, catalyzes the biosynthesis of ceramide phosphoethanolamine (CPE) through the transfer of a phosphatidyl head group from cytidine 5'-diphosphate (CDP)-ethanolamine on to the primary hydroxyl of ceramide. This is Ceramide phosphoethanolamine synthase from Drosophila melanogaster (Fruit fly).